Consider the following 909-residue polypeptide: Protein translocase subunit SecA (909 aa).

Residues Q85, 103-107, and D512 each bind ATP; that span reads GEGKT. Residues 866 to 899 are disordered; sequence HETSATGGEEEINKPVVKGKKIGRNDPCPCGSGK. Residues C893, C895, C904, and C905 each contribute to the Zn(2+) site.

Belongs to the SecA family. As to quaternary structure, monomer and homodimer. Part of the essential Sec protein translocation apparatus which comprises SecA, SecYEG and auxiliary proteins SecDF. Other proteins may also be involved. Requires Zn(2+) as cofactor.

Its subcellular location is the cell membrane. It localises to the cytoplasm. It carries out the reaction ATP + H2O + cellular proteinSide 1 = ADP + phosphate + cellular proteinSide 2.. Part of the Sec protein translocase complex. Interacts with the SecYEG preprotein conducting channel. Has a central role in coupling the hydrolysis of ATP to the transfer of proteins into and across the cell membrane, serving as an ATP-driven molecular motor driving the stepwise translocation of polypeptide chains across the membrane. The chain is Protein translocase subunit SecA from Finegoldia magna (strain ATCC 29328 / DSM 20472 / WAL 2508) (Peptostreptococcus magnus).